Here is a 217-residue protein sequence, read N- to C-terminus: MNQSLLAPFGTAIERVEAGLNALRQGQGVLVVDDEDRENEGDLIFAAQTLTNAQMAMLIRECSGIVCLCLPDEKVKALELPPMVENNSSQYGTAFTVSIEAKVGVTTGVSAADRVTTIKAAIADGAKPSDLARPGHVYPLRAQPGGVLTRRGHTEGTIDLMQLAGLKPAGVLCEVTNPDGTMARLPEIIAFGAQHNIPVLTIEDIVLYRKSLLANVG.

D-ribulose 5-phosphate contacts are provided by residues 37-38 (RE), D42, 150-154 (RRGHT), and E174. E38 contacts Mg(2+). Mg(2+) is bound at residue H153.

It belongs to the DHBP synthase family. As to quaternary structure, homodimer. It depends on Mg(2+) as a cofactor. Requires Mn(2+) as cofactor.

The catalysed reaction is D-ribulose 5-phosphate = (2S)-2-hydroxy-3-oxobutyl phosphate + formate + H(+). The protein operates within cofactor biosynthesis; riboflavin biosynthesis; 2-hydroxy-3-oxobutyl phosphate from D-ribulose 5-phosphate: step 1/1. Functionally, catalyzes the conversion of D-ribulose 5-phosphate to formate and 3,4-dihydroxy-2-butanone 4-phosphate. The sequence is that of 3,4-dihydroxy-2-butanone 4-phosphate synthase from Shewanella sp. (strain W3-18-1).